The sequence spans 369 residues: Ferredoxin--NADP reductase 2 (369 aa).

The segment at 1–21 is disordered; that stretch reads MDLSIPNPVADATRQVEGGSP. FAD-binding residues include aspartate 58, glutamine 66, tyrosine 71, valine 111, phenylalanine 146, aspartate 311, and threonine 352.

It belongs to the ferredoxin--NADP reductase type 2 family. In terms of assembly, homodimer. FAD serves as cofactor.

It carries out the reaction 2 reduced [2Fe-2S]-[ferredoxin] + NADP(+) + H(+) = 2 oxidized [2Fe-2S]-[ferredoxin] + NADPH. This is Ferredoxin--NADP reductase 2 from Cupriavidus taiwanensis (strain DSM 17343 / BCRC 17206 / CCUG 44338 / CIP 107171 / LMG 19424 / R1) (Ralstonia taiwanensis (strain LMG 19424)).